The following is a 278-amino-acid chain: Embryonic polyadenylate-binding protein 2 (278 aa).

2 disordered regions span residues 21–66 (VSSD…GDAG) and 101–128 (EGTPRPPGVQQQAEEEEGTAAGQLLSPE). Positions 35–50 (ETKEILGPEGGEGKEE) are enriched in basic and acidic residues. A compositionally biased stretch (acidic residues) spans 51–63 (KEEEEDAEEDQDG). One can recognise an RRM domain in the interval 147-224 (RSVYVGNVDY…RVIKVLPKRT (78 aa)). Positions 227–278 (PGISSTDRGGLRGHPGSRGAPFPHSGLQGRPRLRPQGQNRARGKFSPWFSPY) are disordered.

In terms of tissue distribution, expressed in various adult tissues.

It localises to the cytoplasm. Its function is as follows. Binds the poly(A) tail of mRNA. The chain is Embryonic polyadenylate-binding protein 2 (PABPN1L) from Homo sapiens (Human).